A 396-amino-acid chain; its full sequence is Phosphoglycerate kinase (396 aa).

Substrate is bound by residues aspartate 21–asparagine 23, arginine 36, histidine 59–arginine 62, arginine 119, and arginine 156. Residues lysine 207, glutamate 325, and glycine 352–serine 355 each bind ATP.

The protein belongs to the phosphoglycerate kinase family. In terms of assembly, monomer.

The protein resides in the cytoplasm. It catalyses the reaction (2R)-3-phosphoglycerate + ATP = (2R)-3-phospho-glyceroyl phosphate + ADP. Its pathway is carbohydrate degradation; glycolysis; pyruvate from D-glyceraldehyde 3-phosphate: step 2/5. This is Phosphoglycerate kinase from Lacticaseibacillus casei (strain BL23) (Lactobacillus casei).